The primary structure comprises 357 residues: Arginine kinase (357 aa).

An N-acetylalanine modification is found at Ala-2. The Phosphagen kinase N-terminal domain occupies 9–91 (KLEEGFKKLE…FDPIIEDYHK (83 aa)). Position 64 to 68 (64 to 68 (GVGVY)) interacts with L-arginine. The region spanning 119-356 (FVISTRVRCG…LELIKIEKEM (238 aa)) is the Phosphagen kinase C-terminal domain. ATP is bound by residues 122-126 (STRVR) and His-185. Glu-225 is an L-arginine binding site. An ATP-binding site is contributed by Arg-229. Cys-271 is an L-arginine binding site. Residues 280–284 (RASVH) and 309–314 (RGTRGE) each bind ATP. Glu-314 provides a ligand contact to L-arginine.

Belongs to the ATP:guanido phosphotransferase family.

The enzyme catalyses L-arginine + ATP = N(omega)-phospho-L-arginine + ADP + H(+). In Callinectes sapidus (Blue crab), this protein is Arginine kinase.